We begin with the raw amino-acid sequence, 399 residues long: Glutathione S-transferase LANCL1 (399 aa).

Alanine 2 is modified (N-acetylalanine). An N6-acetyllysine modification is found at lysine 142. Cysteine 276 serves as a coordination point for Zn(2+). Lysine 317 is a glutathione binding site. Residues cysteine 322 and histidine 323 each contribute to the Zn(2+) site. Glutathione is bound at residue 364-367 (RTPD).

Belongs to the LanC-like protein family. As to quaternary structure, interacts with the C-terminal of STOM. Interacts with the EPS8 SH3 domain. Interaction with EPS8 is inhibited by glutathione binding. Expressed in brain.

The protein localises to the cytoplasm. The protein resides in the cell membrane. The enzyme catalyses RX + glutathione = an S-substituted glutathione + a halide anion + H(+). It catalyses the reaction 1-chloro-2,4-dinitrobenzene + glutathione = 2,4-dinitrophenyl-S-glutathione + chloride + H(+). In terms of biological role, functions as a glutathione transferase. Catalyzes conjugation of the glutathione (GSH) to artificial substrates 1-chloro-2,4-dinitrobenzene (CDNB) and p-nitrophenyl acetate. Mitigates neuronal oxidative stress during normal postnatal development and in response to oxidative stresses probably through GSH antioxidant defense mechanism. May play a role in EPS8 signaling. Binds glutathione. This is Glutathione S-transferase LANCL1 (LANCL1) from Bos taurus (Bovine).